The chain runs to 1491 residues: Membrane-associated guanylate kinase, WW and PDZ domain-containing protein 1 (1491 aa).

One can recognise a PDZ 1 domain in the interval 17 to 105 (ECTVKRGPQG…AVTFKAVRQG (89 aa)). The Guanylate kinase-like domain maps to 96–287 (AVTFKAVRQG…APITDPSQKF (192 aa)). Residue 103–110 (RQGGRLNK) participates in ATP binding. The tract at residues 236–267 (AENEEEDDVPEMNSSFTADSGEQEEHTLQETA) is disordered. The 34-residue stretch at 300 to 333 (GPLPENWEMAYTENGEVYFIDHNTKTTSWLDPRC) folds into the WW 1 domain. Ser-357 is subject to Phosphoserine. A WW 2 domain is found at 359 to 392 (LELPAGWEKIEDPVYGIYYVDHINRKTQYENPVL). Over residues 411-421 (QQQQQQQQQQQ) the composition is skewed to low complexity. The tract at residues 411–462 (QQQQQQQQQQQTEEWTEDHSALVPPVIPNHPPSNPEPAREVPLQGKPFFTRN) is disordered. Residues 435-445 (PVIPNHPPSNP) show a composition bias toward pro residues. Residues 472–554 (HTKLRKSSRG…GASVDLELCR (83 aa)) form the PDZ 2 domain. The span at 586 to 600 (QETYDSPASHSSKTG) shows a compositional bias: polar residues. Disordered stretches follow at residues 586–623 (QETY…SSHG), 720–832 (QRGG…FGEC), and 932–987 (TENE…GGGS). One can recognise a PDZ 3 domain in the interval 643–721 (TVHIVKGPMG…GSEVTLLVQR (79 aa)). 2 positions are modified to phosphoserine: Ser-730 and Ser-741. Positions 742–752 (QNSSQHSVSSH) are enriched in low complexity. A compositionally biased stretch (polar residues) spans 756 to 766 (HTASPSHSTQV). Position 800 is a phosphoserine (Ser-800). In terms of domain architecture, PDZ 4 spans 813-895 (SGLSKGERER…DELICVDGTP (83 aa)). Over residues 939-951 (PASSHHSSNQPAS) the composition is skewed to polar residues. Residues 970–1066 (SSGSGSTSGI…DRILAVNGCS (97 aa)) form the PDZ 5 domain. The interval 970–1066 (SSGSGSTSGI…DRILAVNGCS (97 aa)) is interaction with FCHSD2. Residues 975-987 (STSGIGSGGGGGS) show a composition bias toward gly residues. At Ser-1071 the chain carries Phosphoserine. A compositionally biased stretch (polar residues) spans 1112–1130 (TTTHTPSQQGTQETRNTTK). Disordered stretches follow at residues 1112 to 1143 (TTTH…KAPQ) and 1234 to 1491 (DGSV…DLSI). The 83-residue stretch at 1124-1206 (ETRNTTKPKQ…DEILEINGET (83 aa)) folds into the PDZ 6 domain. 3 stretches are compositionally biased toward basic and acidic residues: residues 1278-1338 (DLHK…DAQA), 1354-1396 (KRRE…DGSP), and 1403-1491 (LERL…DLSI). Phosphoserine is present on residues Ser-1361 and Ser-1412.

In terms of assembly, part of a complex composed of AMOTL2, MAGI1 and CDH5, within the complex AMOTL2 acts as a scaffold protein for the interaction of MAGI1 with CDH5. The complex is required for coupling actin fibers to cell junctions in endothelial cells. Interacts through its WW 2 domain with SYNPO and through its PDZ 5 domain with ACTN4. Interacts with cytoplasmic domain of ADGRB1. Interacts via its WW domains with DRPLA. Interacts with ESAM, LRP2 and CXADR. May interact with CTNNB1. Interacts through its PDZ 1 domain with NET1. Interacts with ASIC3 and AMOT. Interacts with FCHSD2. Interacts with IGSF5/JAM4 and through its PDZ 2 and 3 domains with NPHS1 forming a tripartite complex. Interacts with DDN. Interacts with DLL1. Interacts with KCNJ10 and possibly with KCNJ10/KCNJ16 heterodimer; this interaction may facilitate KCNJ10/KCNJ16 potassium channel expression at the basolateral membrane in kidney tubular cells. Interacts with PRRG4 (via cytoplasmic domain). Interacts (via PDZ domain) with RAPGEF2. In terms of tissue distribution, widely expressed with the exception of skeletal muscle. Isoform 1, isoform 2 and isoform 6 are highly expressed in colon, kidney, lung, liver, and pancreas. Isoform 5 is predominantly expressed in brain and heart. Isoform 3 and isoform 4 are highly expressed in pancreas and brain.

It is found in the cell junction. Its subcellular location is the tight junction. It localises to the cell membrane. In terms of biological role, plays a role in coupling actin fibers to cell junctions in endothelial cells, via its interaction with AMOTL2 and CDH5. May regulate acid-induced ASIC3 currents by modulating its expression at the cell surface. The chain is Membrane-associated guanylate kinase, WW and PDZ domain-containing protein 1 (MAGI1) from Homo sapiens (Human).